A 151-amino-acid polypeptide reads, in one-letter code: Large ribosomal subunit protein bL9 (151 aa).

The protein belongs to the bacterial ribosomal protein bL9 family.

Binds to the 23S rRNA. This Lactobacillus delbrueckii subsp. bulgaricus (strain ATCC BAA-365 / Lb-18) protein is Large ribosomal subunit protein bL9.